The following is a 403-amino-acid chain: Vacuole membrane protein 1 homolog (403 aa).

The stretch at 7–33 forms a coiled coil; the sequence is IVLSNEKDIQLRIQQLEERKEKRKNVK. The next 8 membrane-spanning stretches (helical) occupy residues 65 to 85, 102 to 122, 150 to 170, 175 to 195, 240 to 260, 263 to 283, 294 to 314, and 348 to 368; these read FLLFFIALFASLTFIAVYVPG, IWWVGLGVLSSIGLGTGLHTF, ANSFIQPATAMIGGVSFWMIL, WAALFWGAGTAIGELPPYFVA, LIGNLGFFGILAFASIPNPLF, AGITCGHFLVPFWKFFGATFI, ACFVILAFNMETLTMVISFIE, and VGLAWDCVLFLMISYFLMSIV.

The protein belongs to the VMP1 family.

It is found in the membrane. It localises to the endoplasmic reticulum. The catalysed reaction is a 1,2-diacyl-sn-glycero-3-phospho-L-serine(in) = a 1,2-diacyl-sn-glycero-3-phospho-L-serine(out). It catalyses the reaction cholesterol(in) = cholesterol(out). The enzyme catalyses a 1,2-diacyl-sn-glycero-3-phosphocholine(in) = a 1,2-diacyl-sn-glycero-3-phosphocholine(out). It carries out the reaction a 1,2-diacyl-sn-glycero-3-phosphoethanolamine(in) = a 1,2-diacyl-sn-glycero-3-phosphoethanolamine(out). In terms of biological role, phospholipid scramblase involved in lipid homeostasis and membrane dynamics processes. Required for autophagosome formation: participates in early stages of autophagosome biogenesis at the endoplasmic reticulum (ER) membrane by reequilibrating the leaflets of the ER as lipids are extracted. In addition to autophagy, involved in other processes in which phospholipid scramblase activity is required. This Dictyostelium discoideum (Social amoeba) protein is Vacuole membrane protein 1 homolog.